The following is a 518-amino-acid chain: Putative malate dehydrogenase 1B (518 aa).

Belongs to the LDH/MDH superfamily. MDH type 2 family.

In Homo sapiens (Human), this protein is Putative malate dehydrogenase 1B (MDH1B).